Consider the following 302-residue polypeptide: Sulfate adenylyltransferase subunit 2 (302 aa).

The interval 280–302 (RQGRVIDHDSSGSMEKKKREGYF) is disordered.

The protein belongs to the PAPS reductase family. CysD subfamily. In terms of assembly, heterodimer composed of CysD, the smaller subunit, and CysN.

It carries out the reaction sulfate + ATP + H(+) = adenosine 5'-phosphosulfate + diphosphate. The protein operates within sulfur metabolism; hydrogen sulfide biosynthesis; sulfite from sulfate: step 1/3. In terms of biological role, with CysN forms the ATP sulfurylase (ATPS) that catalyzes the adenylation of sulfate producing adenosine 5'-phosphosulfate (APS) and diphosphate, the first enzymatic step in sulfur assimilation pathway. APS synthesis involves the formation of a high-energy phosphoric-sulfuric acid anhydride bond driven by GTP hydrolysis by CysN coupled to ATP hydrolysis by CysD. This is Sulfate adenylyltransferase subunit 2 from Shewanella amazonensis (strain ATCC BAA-1098 / SB2B).